The chain runs to 244 residues: uncharacterized protein (244 aa).

The next 6 membrane-spanning stretches (helical) occupy residues 5-27, 37-59, 87-106, 116-138, 159-181, and 196-218; these read KFALLFTFAACFAVIVFFWLLAV, IVMVLLISPIFAILLAFNLSRFL, LVFIHLMPIAFLGALIFYYG, LSLFALIFALSPLLFLGISFFVA, FWIWIHLFVILLIIISKVLVQPS, and GVFNLLIIATMNAIFGVTGRMVA.

The protein localises to the cell membrane. This is an uncharacterized protein from Archaeoglobus fulgidus (strain ATCC 49558 / DSM 4304 / JCM 9628 / NBRC 100126 / VC-16).